Reading from the N-terminus, the 444-residue chain is UDP-N-acetylmuramoylalanine--D-glutamate ligase (444 aa).

109-115 (GSNGKTT) is an ATP binding site.

It belongs to the MurCDEF family.

It is found in the cytoplasm. The catalysed reaction is UDP-N-acetyl-alpha-D-muramoyl-L-alanine + D-glutamate + ATP = UDP-N-acetyl-alpha-D-muramoyl-L-alanyl-D-glutamate + ADP + phosphate + H(+). It participates in cell wall biogenesis; peptidoglycan biosynthesis. In terms of biological role, cell wall formation. Catalyzes the addition of glutamate to the nucleotide precursor UDP-N-acetylmuramoyl-L-alanine (UMA). The protein is UDP-N-acetylmuramoylalanine--D-glutamate ligase of Bacteroides thetaiotaomicron (strain ATCC 29148 / DSM 2079 / JCM 5827 / CCUG 10774 / NCTC 10582 / VPI-5482 / E50).